The primary structure comprises 273 residues: ATP synthase subunit a (273 aa).

The next 7 membrane-spanning stretches (helical) occupy residues 34-54 (IINMDTIFWSIFAGVVGCLFM), 94-114 (FIAPLALTVFVWVALMNSLDF), 115-135 (LPVDMFSAFFHAVGLDSLITH), 143-163 (DLNGTMGIALGVFALMIFYNI), 171-191 (FVHELFAAPFGIWLAPFNLLL), 218-238 (FLLIALLGSTATAFGFFGHVV), and 244-264 (AIFHILIVFLQAFIFMMLTLV).

It belongs to the ATPase A chain family. F-type ATPases have 2 components, CF(1) - the catalytic core - and CF(0) - the membrane proton channel. CF(1) has five subunits: alpha(3), beta(3), gamma(1), delta(1), epsilon(1). CF(0) has three main subunits: a(1), b(2) and c(9-12). The alpha and beta chains form an alternating ring which encloses part of the gamma chain. CF(1) is attached to CF(0) by a central stalk formed by the gamma and epsilon chains, while a peripheral stalk is formed by the delta and b chains.

The protein resides in the cell inner membrane. Functionally, key component of the proton channel; it plays a direct role in the translocation of protons across the membrane. The protein is ATP synthase subunit a of Janthinobacterium sp. (strain Marseille) (Minibacterium massiliensis).